A 103-amino-acid polypeptide reads, in one-letter code: Seminal ribonuclease (103 aa).

4 disulfides stabilise this stretch: Cys-12/Cys-70, Cys-26/Cys-81, Cys-44/Cys-96, and Cys-51/Cys-58. Residues 27–31, Lys-52, and Arg-71 each bind substrate; that span reads KLVNT.

Belongs to the pancreatic ribonuclease family. In terms of assembly, homodimer; disulfide-linked.

The protein resides in the secreted. The catalysed reaction is an [RNA] containing cytidine + H2O = an [RNA]-3'-cytidine-3'-phosphate + a 5'-hydroxy-ribonucleotide-3'-[RNA].. The enzyme catalyses an [RNA] containing uridine + H2O = an [RNA]-3'-uridine-3'-phosphate + a 5'-hydroxy-ribonucleotide-3'-[RNA].. Its function is as follows. This enzyme hydrolyzes both single- and double-stranded RNA. In Cephalophus silvicultor (Yellow-backed duiker), this protein is Seminal ribonuclease (SRN).